We begin with the raw amino-acid sequence, 424 residues long: UPF0597 protein Sputcn32_1209 (424 aa).

The protein belongs to the UPF0597 family.

This Shewanella putrefaciens (strain CN-32 / ATCC BAA-453) protein is UPF0597 protein Sputcn32_1209.